We begin with the raw amino-acid sequence, 208 residues long: Small ribosomal subunit protein uS4 (208 aa).

Residues 98 to 161 (RRLDNVIYRL…RKIPVIAEAQ (64 aa)) enclose the S4 RNA-binding domain.

It belongs to the universal ribosomal protein uS4 family. Part of the 30S ribosomal subunit. Contacts protein S5. The interaction surface between S4 and S5 is involved in control of translational fidelity.

Functionally, one of the primary rRNA binding proteins, it binds directly to 16S rRNA where it nucleates assembly of the body of the 30S subunit. In terms of biological role, with S5 and S12 plays an important role in translational accuracy. The polypeptide is Small ribosomal subunit protein uS4 (Nitratidesulfovibrio vulgaris (strain DSM 19637 / Miyazaki F) (Desulfovibrio vulgaris)).